The following is a 147-amino-acid chain: Allograft inflammatory factor 1 (147 aa).

An N-acetylserine modification is found at Ser2. Lys11 carries the N6-acetyllysine modification. Phosphoserine is present on Ser39. An EF-hand 1 domain is found at 45 to 80; sequence SKLEGFKEKYMEFDLNGNGDIDIMSLKRMLEKLGVP. The Ca(2+) site is built by Asp58, Asn60, Asn62, Asp64, Thr100, and Asp105. Residues 81–115 form the EF-hand 2; degenerate domain; it reads KTHLELKKLIGEVSSGSGETFSYPDFLRMMLGKRS. A disordered region spans residues 128-147; the sequence is AREKEKPTGPPAKKAISELP.

As to quaternary structure, homodimer (Potential). Monomer. Interacts with LCP1. Post-translationally, phosphorylated on serine residues. As to expression, detected in T-lymphocytes and peripheral blood mononuclear cells.

It is found in the cytoplasm. The protein localises to the cytoskeleton. It localises to the cell projection. The protein resides in the ruffle membrane. Its subcellular location is the phagocytic cup. In terms of biological role, actin-binding protein that enhances membrane ruffling and RAC activation. Enhances the actin-bundling activity of LCP1. Binds calcium. Plays a role in RAC signaling and in phagocytosis. May play a role in macrophage activation and function. Promotes the proliferation of vascular smooth muscle cells and of T-lymphocytes. Enhances lymphocyte migration. Plays a role in vascular inflammation. The polypeptide is Allograft inflammatory factor 1 (AIF1) (Homo sapiens (Human)).